We begin with the raw amino-acid sequence, 555 residues long: Cyclin-T1.2 (555 aa).

Disordered stretches follow at residues 315–429 (SYKG…NSSK) and 505–555 (PADS…GELV). A compositionally biased stretch (low complexity) spans 321-335 (KPLSNSSDSPSTRPS). A compositionally biased stretch (basic and acidic residues) spans 341 to 359 (KNQKVVEQELMEQRMKEAA). A compositionally biased stretch (low complexity) spans 382–398 (TSSSASNNSNHQNRSSS). Over residues 521-543 (PDEPSPPVSQILLPPPPPPPILP) the composition is skewed to pro residues.

Belongs to the cyclin family. Cyclin C subfamily.

In terms of biological role, regulatory subunit of the cyclin-dependent kinase pair (CDK9/cyclin T) complex, also called positive transcription elongation factor B (P-TEFb), which is proposed to facilitate the transition from abortive to production elongation by phosphorylating the CTD (carboxy-terminal domain) of the large subunit of RNA polymerase II (RNAP II). In Caenorhabditis elegans, this protein is Cyclin-T1.2 (cit-1.2).